Consider the following 397-residue polypeptide: 1-deoxy-D-xylulose 5-phosphate reductoisomerase (397 aa).

Residues Ser-10, Gly-11, Ser-12, Ile-13, Ala-36, Arg-37, and Asn-124 each contribute to the NADPH site. Residue Lys-125 participates in 1-deoxy-D-xylulose 5-phosphate binding. Glu-126 contacts NADPH. Asp-150 serves as a coordination point for Mn(2+). Residues Ser-151, Glu-152, Ser-186, and His-209 each coordinate 1-deoxy-D-xylulose 5-phosphate. Glu-152 provides a ligand contact to Mn(2+). Gly-215 contacts NADPH. Residues Ser-222, Asn-227, Lys-228, and Glu-231 each contribute to the 1-deoxy-D-xylulose 5-phosphate site. Residue Glu-231 participates in Mn(2+) binding.

This sequence belongs to the DXR family. Requires Mg(2+) as cofactor. Mn(2+) serves as cofactor.

It carries out the reaction 2-C-methyl-D-erythritol 4-phosphate + NADP(+) = 1-deoxy-D-xylulose 5-phosphate + NADPH + H(+). The protein operates within isoprenoid biosynthesis; isopentenyl diphosphate biosynthesis via DXP pathway; isopentenyl diphosphate from 1-deoxy-D-xylulose 5-phosphate: step 1/6. In terms of biological role, catalyzes the NADPH-dependent rearrangement and reduction of 1-deoxy-D-xylulose-5-phosphate (DXP) to 2-C-methyl-D-erythritol 4-phosphate (MEP). The chain is 1-deoxy-D-xylulose 5-phosphate reductoisomerase from Aeromonas salmonicida (strain A449).